Consider the following 123-residue polypeptide: MIQEQTMLNVADNSGARRVMCIKVLGGSHRRYAGVGDIIKITIKEAIPRGKVKKGDVLKAVVVRTKKGVRRPDGSVIRFDGNACVILNNNSEQPVGTRIFGPVTRELRNERFMKIISLAPEVL.

The protein belongs to the universal ribosomal protein uL14 family. Part of the 50S ribosomal subunit. Forms a cluster with proteins L3 and L19. In the 70S ribosome, L14 and L19 interact and together make contacts with the 16S rRNA in bridges B5 and B8.

Functionally, binds to 23S rRNA. Forms part of two intersubunit bridges in the 70S ribosome. This chain is Large ribosomal subunit protein uL14, found in Buchnera aphidicola subsp. Acyrthosiphon kondoi (Acyrthosiphon kondoi symbiotic bacterium).